A 193-amino-acid chain; its full sequence is 7-methyl-GTP pyrophosphatase (193 aa).

Residue Asp-70 is the Proton acceptor of the active site.

Belongs to the Maf family. YceF subfamily. The cofactor is a divalent metal cation.

Its subcellular location is the cytoplasm. It carries out the reaction N(7)-methyl-GTP + H2O = N(7)-methyl-GMP + diphosphate + H(+). In terms of biological role, nucleoside triphosphate pyrophosphatase that hydrolyzes 7-methyl-GTP (m(7)GTP). May have a dual role in cell division arrest and in preventing the incorporation of modified nucleotides into cellular nucleic acids. The protein is 7-methyl-GTP pyrophosphatase of Vibrio cholerae serotype O1 (strain ATCC 39315 / El Tor Inaba N16961).